The primary structure comprises 877 residues: Probable alpha/beta-glucosidase agdC (877 aa).

The signal sequence occupies residues 1–14 (MLGSLLLLAPLAGA). N-linked (GlcNAc...) asparagine glycosylation is found at Asn-171, Asn-293, and Asn-373. Asp-422 functions as the Nucleophile in the catalytic mechanism. Glu-425 is a catalytic residue. The segment at 432-476 (DPCTDPERYSSENNLPPAPPPVRSSSPRPLPGFPADFQPSSASRS) is disordered. The span at 447–463 (PPAPPPVRSSSPRPLPG) shows a compositional bias: pro residues. Asn-508 carries an N-linked (GlcNAc...) asparagine glycan. Asp-573 acts as the Proton donor in catalysis. N-linked (GlcNAc...) asparagine glycosylation is found at Asn-574, Asn-610, and Asn-744.

Belongs to the glycosyl hydrolase 31 family.

It localises to the secreted. It carries out the reaction Hydrolysis of terminal, non-reducing (1-&gt;4)-linked alpha-D-glucose residues with release of alpha-D-glucose.. The catalysed reaction is Hydrolysis of terminal, non-reducing beta-D-glucosyl residues with release of beta-D-glucose.. In terms of biological role, glucosidase involved in the degradation of cellulosic biomass. Has both alpha- and beta-glucosidase activity. This is Probable alpha/beta-glucosidase agdC (agdC) from Aspergillus flavus (strain ATCC 200026 / FGSC A1120 / IAM 13836 / NRRL 3357 / JCM 12722 / SRRC 167).